The chain runs to 283 residues: Shikimate dehydrogenase (NADP(+)) (283 aa).

Residues S16–S18 and T63 each bind shikimate. Residue K67 is the Proton acceptor of the active site. Position 79 (D79) interacts with NADP(+). Residues N88 and D103 each coordinate shikimate. NADP(+) contacts are provided by residues G128 to A132 and G243.

This sequence belongs to the shikimate dehydrogenase family. In terms of assembly, homodimer.

It carries out the reaction shikimate + NADP(+) = 3-dehydroshikimate + NADPH + H(+). It functions in the pathway metabolic intermediate biosynthesis; chorismate biosynthesis; chorismate from D-erythrose 4-phosphate and phosphoenolpyruvate: step 4/7. In terms of biological role, involved in the biosynthesis of the chorismate, which leads to the biosynthesis of aromatic amino acids. Catalyzes the reversible NADPH linked reduction of 3-dehydroshikimate (DHSA) to yield shikimate (SA). In Xanthomonas euvesicatoria pv. vesicatoria (strain 85-10) (Xanthomonas campestris pv. vesicatoria), this protein is Shikimate dehydrogenase (NADP(+)).